The chain runs to 112 residues: Nitrogen regulatory protein P-II 1 (112 aa).

Tyrosine 51 carries the post-translational modification O-UMP-tyrosine.

It belongs to the P(II) protein family. In terms of assembly, homotrimer. Uridylylated/deuridylylated by GlnD.

Its function is as follows. P-II indirectly controls the transcription of the glutamine synthetase gene (GlnA). P-II prevents NR-II-catalyzed conversion of NR-I to NR-I-phosphate, the transcriptional activator of GlnA. When P-II is uridylylated to P-II-UMP, these events are reversed. When the ratio of Gln to 2-ketoglutarate decreases, P-II is uridylylated to P-II-UMP, which causes the deadenylation of glutamine synthetase by GlnE, so activating the enzyme. In Escherichia coli O157:H7, this protein is Nitrogen regulatory protein P-II 1 (glnB).